The primary structure comprises 345 residues: S-adenosylmethionine:tRNA ribosyltransferase-isomerase (345 aa).

The protein belongs to the QueA family. As to quaternary structure, monomer.

Its subcellular location is the cytoplasm. The enzyme catalyses 7-aminomethyl-7-carbaguanosine(34) in tRNA + S-adenosyl-L-methionine = epoxyqueuosine(34) in tRNA + adenine + L-methionine + 2 H(+). It participates in tRNA modification; tRNA-queuosine biosynthesis. Functionally, transfers and isomerizes the ribose moiety from AdoMet to the 7-aminomethyl group of 7-deazaguanine (preQ1-tRNA) to give epoxyqueuosine (oQ-tRNA). The polypeptide is S-adenosylmethionine:tRNA ribosyltransferase-isomerase (Shewanella woodyi (strain ATCC 51908 / MS32)).